The following is a 502-amino-acid chain: Glycerol kinase (502 aa).

Position 14 (Thr-14) interacts with ADP. Positions 14, 15, and 16 each coordinate ATP. Residue Thr-14 coordinates sn-glycerol 3-phosphate. Arg-18 is an ADP binding site. Residues Arg-84, Glu-85, Tyr-136, and Asp-246 each contribute to the sn-glycerol 3-phosphate site. Positions 84, 85, 136, 246, and 247 each coordinate glycerol. 2 residues coordinate ADP: Thr-268 and Gly-311. ATP is bound by residues Thr-268, Gly-311, Gln-315, and Gly-412. ADP contacts are provided by Gly-412 and Asn-416.

The protein belongs to the FGGY kinase family. In terms of assembly, homotetramer and homodimer (in equilibrium). Heterodimer with EIIA-Glc. Binds 1 zinc ion per glycerol kinase EIIA-Glc dimer. The zinc ion is important for dimerization.

It carries out the reaction glycerol + ATP = sn-glycerol 3-phosphate + ADP + H(+). It functions in the pathway polyol metabolism; glycerol degradation via glycerol kinase pathway; sn-glycerol 3-phosphate from glycerol: step 1/1. With respect to regulation, activity of this regulatory enzyme is affected by several metabolites. Allosterically and non-competitively inhibited by fructose 1,6-bisphosphate (FBP) and unphosphorylated phosphocarrier protein EIIA-Glc (III-Glc), an integral component of the bacterial phosphotransferase (PTS) system. Its function is as follows. Key enzyme in the regulation of glycerol uptake and metabolism. Catalyzes the phosphorylation of glycerol to yield sn-glycerol 3-phosphate. The sequence is that of Glycerol kinase from Salmonella arizonae (strain ATCC BAA-731 / CDC346-86 / RSK2980).